Consider the following 195-residue polypeptide: Protein GrpE (195 aa).

Basic and acidic residues predominate over residues 1–18; it reads MDPKEKKTKQEEELKVDD. The tract at residues 1–41 is disordered; sequence MDPKEKKTKQEEELKVDDIQDTVEGQSQNEEATEATEPLTA.

It belongs to the GrpE family. As to quaternary structure, homodimer.

It localises to the cytoplasm. Functionally, participates actively in the response to hyperosmotic and heat shock by preventing the aggregation of stress-denatured proteins, in association with DnaK and GrpE. It is the nucleotide exchange factor for DnaK and may function as a thermosensor. Unfolded proteins bind initially to DnaJ; upon interaction with the DnaJ-bound protein, DnaK hydrolyzes its bound ATP, resulting in the formation of a stable complex. GrpE releases ADP from DnaK; ATP binding to DnaK triggers the release of the substrate protein, thus completing the reaction cycle. Several rounds of ATP-dependent interactions between DnaJ, DnaK and GrpE are required for fully efficient folding. This chain is Protein GrpE, found in Bacteroides fragilis (strain ATCC 25285 / DSM 2151 / CCUG 4856 / JCM 11019 / LMG 10263 / NCTC 9343 / Onslow / VPI 2553 / EN-2).